The chain runs to 164 residues: uncharacterized protein (164 aa).

A BFN domain is found at 1–129 (MGEVRVVGIR…AVLAQAGLLI (129 aa)).

This is an uncharacterized protein from Mycobacterium tuberculosis (strain CDC 1551 / Oshkosh).